A 293-amino-acid chain; its full sequence is MKKLTMESLSVYIFVMGVCFTSNFTCEQKIVLIQEHKLRSICISTCYVNGVLAGNSSCVSVKTSYLINLAMLTNGFKAMRVGNITSISEKTAFLRVIINYYFRGVMLRALIAQRLPNAANLSSTVNCWLDDHSAGGVMTLFYGTERIVLNSSTEINASRWISDGQDANGTLNILNERVSLDIYFLSKICPQLSSEIYKKKVAHPKYFSLIKNDTKPKKFLRNTWRSAWSNWYKYKEIKEFLDFSSDYENFSEITYSMSAAGLFFLAGGAFTMLLLLCCLSMITRKHIVKDLGY.

The signal sequence occupies residues 1–21 (MKKLTMESLSVYIFVMGVCFT). N-linked (GlcNAc...) asparagine; by host glycans are attached at residues N23, N55, N83, N120, N150, N156, N168, N212, and N249. Residues 262–282 (LFFLAGGAFTMLLLLCCLSMI) form a helical membrane-spanning segment.

Belongs to the herpesviridae immediate early glycoprotein family.

The protein localises to the membrane. In Human herpesvirus 6A (strain Uganda-1102) (HHV-6 variant A), this protein is Putative immediate early glycoprotein (U18).